Consider the following 549-residue polypeptide: MASTLFRNIQTHPLLLYPTSFFRRKSSVFYCTVNSTSPTATQEKQQCPRIKVSPQTQSKSLDKLTKDYETIIGIETHVQLSTLTKAFCSCPYNYGAQPNSTICPVCMGLPGALPVLNSKVIEFAVKLGLALNCKLSLNSKFDRKQYFYPDLPKGYQISQFDIPIATSGYVDLDLPVEFGGGHRRFGITRVHMEEDAGKLLHSGGGISGAIVDLNRAGVPLLEIVSEPDMRNGIEAAEYAAELQRVVRYLGVSNGNMQEGSLRCDVNVSIRPIGQSEFGTKVEIKNLNSFSSINRAIDFEISRQVLLHSQGQSDSIVQETRLWEEGAQKTVTMRKKEGLSDYRYFPEPDLPEVVLTEEYVDSIQSSLPELPETKRRRYENMGLSMQDVLFLANDTSVAEFFDATIAQGAQVKLAANWIMGDIAAYMKNEKVSINEIKLTPKELAELIASIKGGIISGKIGKEILFELIAKGGTVKGLIKEKDLVQIVDPAEIEKMVDKVLSENPKQLEQYRAGKTKLQGFFAGQVMKASKGKANPGLLNKILQEKLNAKS.

The protein belongs to the GatB/GatE family. GatB subfamily. In terms of assembly, subunit of the heterotrimeric GatCAB amidotransferase (AdT) complex, composed of A, B and C subunits.

The protein resides in the mitochondrion. It is found in the plastid. It localises to the chloroplast. It carries out the reaction L-glutamyl-tRNA(Gln) + L-glutamine + ATP + H2O = L-glutaminyl-tRNA(Gln) + L-glutamate + ADP + phosphate + H(+). Its function is as follows. Allows the formation of correctly charged Gln-tRNA(Gln) through the transamidation of misacylated Glu-tRNA(Gln) in chloroplasts and mitochondria. The reaction takes place in the presence of glutamine and ATP through an activated gamma-phospho-Glu-tRNA(Gln). The chain is Glutamyl-tRNA(Gln) amidotransferase subunit B, chloroplastic/mitochondrial from Ricinus communis (Castor bean).